A 116-amino-acid polypeptide reads, in one-letter code: NADH-ubiquinone oxidoreductase chain 3 (116 aa).

3 consecutive transmembrane segments (helical) span residues 3-23 (LITTIITITITLSAVLATISF), 56-76 (FFLIAILFLLFDLEIALLLPL), and 87-107 (LTLIWSTAVLALLTLGLIYEW).

The protein belongs to the complex I subunit 3 family.

The protein localises to the mitochondrion membrane. It carries out the reaction a ubiquinone + NADH + 5 H(+)(in) = a ubiquinol + NAD(+) + 4 H(+)(out). Core subunit of the mitochondrial membrane respiratory chain NADH dehydrogenase (Complex I) that is believed to belong to the minimal assembly required for catalysis. Complex I functions in the transfer of electrons from NADH to the respiratory chain. The immediate electron acceptor for the enzyme is believed to be ubiquinone. The protein is NADH-ubiquinone oxidoreductase chain 3 (MT-ND3) of Oncorhynchus gorbuscha (Pink salmon).